Here is a 509-residue protein sequence, read N- to C-terminus: MAAIGVHLGCTCACVAVYKDGRADVVANDAGDRVTPAVVGFLEKEVIVGLAAKQSRVRNAANTIVKVKQILGRSYADPHAQKHISENKCIVVEKGGKPKYEIDTGEIQKLVSSEDVAKLIFSKMKETAQSALGSDVNDVVITVPFDFGESQKKALGEAALAAGFNILRMIHEPSAALLAYGIGQESPTGKSNVLVYKLGGTSLSVTMIEVNSGIYRVLATSTYDGIGGVCFTEALAQHLASEFQRTYKQDIRGNARAMMKLMNSADVAKHALSTLGSANCFVDSLYDGIDFDCSVSRARFELICSSLFNQCIDPIEKLLEQVGCKATDVNQVVLCGGSARIPKLQLLIKDLFPEVEMLSSIPPDEVIPVGAAIQAGILLGKENLSTDLDTITIECLASDILVKETDESGNNKFTVLLPSGTPLPARRQHVLQAPGNISSVCLELYESVGKSTVSEECKFAQIVLKDLQKKASGVHDILTVLTMKRDGSLHITCTDKDSGKSEMITVETS.

This sequence belongs to the heat shock protein 70 family. In terms of assembly, component of ribosome-associated complex (RAC).

The protein localises to the cytoplasm. Its subcellular location is the cytosol. In terms of biological role, component of the ribosome-associated complex (RAC), a complex involved in folding or maintaining nascent polypeptides in a folding-competent state. This Xenopus laevis (African clawed frog) protein is Heat shock 70 kDa protein 14-A (hspa14-a).